The chain runs to 177 residues: Large ribosomal subunit protein uL6 (177 aa).

The span at 157-171 (YKGKGVRYSDENVRR) shows a compositional bias: basic and acidic residues. Residues 157–177 (YKGKGVRYSDENVRRKEAKKK) are disordered.

It belongs to the universal ribosomal protein uL6 family. In terms of assembly, part of the 50S ribosomal subunit.

This protein binds to the 23S rRNA, and is important in its secondary structure. It is located near the subunit interface in the base of the L7/L12 stalk, and near the tRNA binding site of the peptidyltransferase center. The polypeptide is Large ribosomal subunit protein uL6 (Pseudoalteromonas translucida (strain TAC 125)).